Consider the following 297-residue polypeptide: 4-diphosphocytidyl-2-C-methyl-D-erythritol kinase (297 aa).

Active-site residues include Lys6 and Asp144.

Belongs to the GHMP kinase family. IspE subfamily.

The catalysed reaction is 4-CDP-2-C-methyl-D-erythritol + ATP = 4-CDP-2-C-methyl-D-erythritol 2-phosphate + ADP + H(+). The protein operates within isoprenoid biosynthesis; isopentenyl diphosphate biosynthesis via DXP pathway; isopentenyl diphosphate from 1-deoxy-D-xylulose 5-phosphate: step 3/6. Catalyzes the phosphorylation of the position 2 hydroxy group of 4-diphosphocytidyl-2C-methyl-D-erythritol. The sequence is that of 4-diphosphocytidyl-2-C-methyl-D-erythritol kinase from Leptospira interrogans serogroup Icterohaemorrhagiae serovar Lai (strain 56601).